The primary structure comprises 478 residues: ATP-dependent RNA helicase DDX19A (478 aa).

An N-acetylalanine modification is found at Ala2. Residues 2-299 form an N-terminal lobe region; sequence ATDSWALAVD…DPNIIKLKRE (298 aa). Lys26 is covalently cross-linked (Glycyl lysine isopeptide (Lys-Gly) (interchain with G-Cter in SUMO1); alternate). Residue Lys26 forms a Glycyl lysine isopeptide (Lys-Gly) (interchain with G-Cter in SUMO2); alternate linkage. The disordered stretch occupies residues 31–55; sequence KPDTNGVIKTNATPEKTDEEEKEDR. Positions 54 to 67 are N-terminal helix; that stretch reads DRAAQSLLNKLIRS. A Q motif motif is present at residues 91 to 119; it reads KSFEELRLKPQLLQGVYAMGFNRPSKIQE. ATP contacts are provided by residues Gln118 and 137–144; that span reads SQSGTGKT. A Helicase ATP-binding domain is found at 124–294; sequence MMLAEPPQNL…QKVVPDPNII (171 aa). A DEAD box motif is present at residues 241 to 244; it reads DEAD. Residues 300 to 478 form a C-terminal lobe region; sequence EETLDTIKQY…DLDEIEKIAN (179 aa). Residues 305–473 enclose the Helicase C-terminal domain; the sequence is TIKQYYVLCN…RLDTDDLDEI (169 aa). ATP contacts are provided by Arg428 and Arg431.

Belongs to the DEAD box helicase family. DDX19/DBP5 subfamily.

It is found in the cytoplasm. The protein localises to the nucleus. The protein resides in the nucleoplasm. It carries out the reaction ATP + H2O = ADP + phosphate + H(+). Functionally, ATP-dependent RNA helicase involved in mRNA export from the nucleus. Rather than unwinding RNA duplexes, DDX19 functions as a remodeler of ribonucleoprotein particles, whereby proteins bound to nuclear mRNA are dissociated and replaced by cytoplasmic mRNA binding proteins. The polypeptide is ATP-dependent RNA helicase DDX19A (DDX19A) (Bos taurus (Bovine)).